Consider the following 123-residue polypeptide: Large ribosomal subunit protein bL12 (123 aa).

The protein belongs to the bacterial ribosomal protein bL12 family. As to quaternary structure, homodimer. Part of the ribosomal stalk of the 50S ribosomal subunit. Forms a multimeric L10(L12)X complex, where L10 forms an elongated spine to which 2 to 4 L12 dimers bind in a sequential fashion. Binds GTP-bound translation factors.

Its function is as follows. Forms part of the ribosomal stalk which helps the ribosome interact with GTP-bound translation factors. Is thus essential for accurate translation. The polypeptide is Large ribosomal subunit protein bL12 (Bartonella bacilliformis (strain ATCC 35685 / KC583 / Herrer 020/F12,63)).